A 565-amino-acid chain; its full sequence is Transcription factor asqA (565 aa).

Residues 204–273 are fungal transcription factor domain; the sequence is MDTAMAQAVR…HSMPALCIDS (70 aa).

The protein resides in the nucleus. Transcription factor that regulates specifically the 4'-methoxyviridicatin/aspoquinolone biosynthesis cluster. The protein is Transcription factor asqA of Emericella nidulans (strain FGSC A4 / ATCC 38163 / CBS 112.46 / NRRL 194 / M139) (Aspergillus nidulans).